Consider the following 75-residue polypeptide: Psi-conotoxin PIIIE (75 aa).

The N-terminal stretch at 1–19 (MSKLGALLTICLLLFPITA) is a signal peptide. Positions 20–50 (LLMDGDQPADRPAERMDYDISSEVHRLLERR) are excised as a propeptide. 3 positions are modified to 4-hydroxyproline: proline 52, proline 53, and proline 64. Disulfide bonds link cysteine 54–cysteine 66, cysteine 55–cysteine 71, and cysteine 60–cysteine 72. Position 74 is a glycine amide (glycine 74).

Expressed by the venom duct.

The protein localises to the secreted. Psi-conotoxins act on postsynaptic membranes, and act as non-competitive antagonist of nicotinic acetylcholine receptors (nAChR). Is more toxic than Psi-conotoxin PIIIF. In vivo, has paralytic activity when injected intraperitoneally into goldfish. The chain is Psi-conotoxin PIIIE from Conus purpurascens (Purple cone).